Consider the following 309-residue polypeptide: THAP domain-containing protein 7 (309 aa).

The THAP-type zinc finger occupies 1 to 93 (MPRHCSAAGC…LKEGAVPTIF (93 aa)). S162 is modified (phosphoserine). Residues 176–210 (SDLLGPLGAQADEAGCSTQPSPEQHPSPLEPQPAS) form a disordered region. Residues 198–209 (EQHPSPLEPQPA) show a composition bias toward pro residues. At S210 the chain carries Phosphoserine. The HCFC1-binding motif (HBM) signature appears at 229–232 (EHSY).

In terms of assembly, forms homodimers. Interacts with HDAC3 and nuclear hormone receptor corepressors. Interacts via HBM with HCFC1.

It localises to the nucleus. The protein resides in the chromosome. In terms of biological role, chromatin-associated, histone tail-binding protein that represses transcription via recruitment of HDAC3 and nuclear hormone receptor corepressors. The polypeptide is THAP domain-containing protein 7 (Thap7) (Mus musculus (Mouse)).